The chain runs to 443 residues: Glutamine synthetase (443 aa).

The GS beta-grasp domain occupies 16–101 (NGVKFIRLQF…LICDVYKPDG (86 aa)). A GS catalytic domain is found at 108–443 (PRHVLKRANA…WELENYLNKY (336 aa)). Residues Glu131 and Glu133 each contribute to the Mg(2+) site. Glu183 serves as a coordination point for ATP. Mg(2+) contacts are provided by Glu188 and Glu195. Residues 239 to 240 (NG) and Gly240 contribute to the L-glutamate site. His244 lines the Mg(2+) pocket. ATP is bound at residue Ser248. 3 residues coordinate L-glutamate: Arg297, Glu303, and Arg315. Residues Arg315 and Arg320 each contribute to the ATP site. Residue Glu332 participates in Mg(2+) binding. Arg334 provides a ligand contact to L-glutamate.

The protein belongs to the glutamine synthetase family. In terms of assembly, oligomer of 12 subunits arranged in the form of two hexagons. In its feedback-inhibited form, interacts with TnrA in order to block its DNA-binding activity. Mg(2+) is required as a cofactor.

The protein localises to the cytoplasm. The enzyme catalyses L-glutamate + NH4(+) + ATP = L-glutamine + ADP + phosphate + H(+). Inhibited by glutamine. In terms of biological role, glutamine synthetase (GS) is an unusual multitasking protein that functions as an enzyme, a transcription coregulator, and a chaperone in ammonium assimilation and in the regulation of genes involved in nitrogen metabolism. It catalyzes the ATP-dependent biosynthesis of glutamine from glutamate and ammonia. Feedback-inhibited GlnA also interacts with and regulates the activity of the transcriptional regulator TnrA. During nitrogen limitation, TnrA is in its DNA-binding active state and turns on the transcription of genes required for nitrogen assimilation. Under conditions of nitrogen excess, feedback-inhibited GlnA forms a stable complex with TnrA, which inhibits its DNA-binding activity. In contrast, feedback-inhibited GlnA acts as a chaperone to stabilize the DNA-binding activity of GlnR, which represses the transcription of nitrogen assimilation genes. In Clostridium saccharobutylicum, this protein is Glutamine synthetase.